The primary structure comprises 478 residues: tRNA(Ile)-lysidine synthase (478 aa).

Position 27 to 32 (27 to 32) interacts with ATP; it reads SGGSDS.

The protein belongs to the tRNA(Ile)-lysidine synthase family.

It is found in the cytoplasm. It catalyses the reaction cytidine(34) in tRNA(Ile2) + L-lysine + ATP = lysidine(34) in tRNA(Ile2) + AMP + diphosphate + H(+). Its function is as follows. Ligates lysine onto the cytidine present at position 34 of the AUA codon-specific tRNA(Ile) that contains the anticodon CAU, in an ATP-dependent manner. Cytidine is converted to lysidine, thus changing the amino acid specificity of the tRNA from methionine to isoleucine. This chain is tRNA(Ile)-lysidine synthase, found in Rickettsia rickettsii (strain Iowa).